The sequence spans 245 residues: 14-3-3 protein theta (245 aa).

Met1 is subject to N-acetylmethionine. An N6-acetyllysine modification is found at Lys3. At Lys49 the chain carries N6-acetyllysine; alternate. A Glycyl lysine isopeptide (Lys-Gly) (interchain with G-Cter in SUMO2); alternate cross-link involves residue Lys49. An N6-acetyllysine modification is found at Lys68. 3'-nitrotyrosine is present on Tyr82. At Ser92 the chain carries Phosphoserine. Tyr104 carries the 3'-nitrotyrosine modification. Lys115 carries the post-translational modification N6-acetyllysine. Ser232 carries the phosphoserine; by CK1 modification.

It belongs to the 14-3-3 family. In terms of assembly, homodimer. Interacts with CDK16. Interacts with RGS7 (phosphorylated form). Interacts with SSH1. Interacts with CDKN1B ('Thr-198' phosphorylated form); the interaction translocates CDKN1B to the cytoplasm. Interacts with GAB2. Interacts with the 'Ser-241' phosphorylated form of PDPK1. Interacts with the 'Thr-369' phosphorylated form of DAPK2. Interacts with PI4KB, TBC1D22A and TBC1D22B. Interacts with SLITRK1. Interacts with RIPOR2. Interacts with INAVA; the interaction increases upon PRR (pattern recognition receptor) stimulation and is required for cellular signaling pathway activation and cytokine secretion. Interacts with MARK2, MARK3 and MARK4. Interacts with MEFV.

Its subcellular location is the cytoplasm. Adapter protein implicated in the regulation of a large spectrum of both general and specialized signaling pathways. Binds to a large number of partners, usually by recognition of a phosphoserine or phosphothreonine motif. Binding generally results in the modulation of the activity of the binding partner. Negatively regulates the kinase activity of PDPK1. The polypeptide is 14-3-3 protein theta (YWHAQ) (Bos taurus (Bovine)).